Reading from the N-terminus, the 301-residue chain is Eukaryotic translation initiation factor 3 subunit F (301 aa).

One can recognise an MPN domain in the interval 32–169 (VHVHPVALFS…IKSYISSPLG (138 aa)).

This sequence belongs to the eIF-3 subunit F family. In terms of assembly, component of the eukaryotic translation initiation factor 3 (eIF-3) complex.

The protein resides in the cytoplasm. Its function is as follows. Component of the eukaryotic translation initiation factor 3 (eIF-3) complex, which is involved in protein synthesis of a specialized repertoire of mRNAs and, together with other initiation factors, stimulates binding of mRNA and methionyl-tRNAi to the 40S ribosome. The eIF-3 complex specifically targets and initiates translation of a subset of mRNAs involved in cell proliferation. This is Eukaryotic translation initiation factor 3 subunit F from Mycosarcoma maydis (Corn smut fungus).